Reading from the N-terminus, the 963-residue chain is Adhesion G protein-coupled receptor D2 (963 aa).

Topologically, residues 1–662 are extracellular; sequence MDAPWGAGER…EEESLLRTLS (662 aa). The disordered stretch occupies residues 18 to 38; sequence DRSGVSLGPPPTPQVNQGTLG. The Pentraxin (PTX) domain maps to 116–325; that stretch reads TTAVLVFDER…LPTVWVRLLC (210 aa). A disulfide bridge connects residues Cys146 and Cys212. A glycan (N-linked (GlcNAc...) asparagine) is linked at Asn271. Residues 489-649 enclose the GAIN-B domain; the sequence is MALVASVQRL…AILLQIYEVQ (161 aa). A GPS region spans residues 599–649; the sequence is PLFPPHPPSPYTGGAWATTGCSVAALYLDSTACFCNHSTSFAILLQIYEVQ. Cys619 and Cys633 are joined by a disulfide. An N-linked (GlcNAc...) asparagine glycan is attached at Asn634. A helical membrane pass occupies residues 663–683; sequence FVGCGVSFCALTTTFLLFLVA. Residues 684 to 691 are Cytoplasmic-facing; sequence GVPKSERT. The helical transmembrane segment at 692 to 712 threads the bilayer; it reads TVHKNLTFSLASAEGFLMTSE. At 713–720 the chain is on the extracellular side; sequence WAKANEVA. The helical transmembrane segment at 721–741 threads the bilayer; the sequence is CVAVTVAMHFLFLVAFSWMLV. Over 742–762 the chain is Cytoplasmic; sequence EGLLLWRKVVAVSMHPGPGMR. Residues 763-783 form a helical membrane-spanning segment; that stretch reads LYHATGWGVPVGIVAVTLAML. The Extracellular portion of the chain corresponds to 784–800; sequence PHDYVAPGHCWLNVHTN. The chain crosses the membrane as a helical span at residues 801-821; sequence AIWAFVGPVLFVLTANTCILA. Topologically, residues 822–857 are cytoplasmic; it reads RVVMITVSSARRRARMLSPQPCLQQQIWTQIWATVK. A helical membrane pass occupies residues 858 to 878; sequence PVLVLLPVLGLTWLAGILVHL. Residues 879-880 are Extracellular-facing; the sequence is SP. The chain crosses the membrane as a helical span at residues 881 to 901; sequence AWAYAAVGLNSIQGLYIFLVY. Topologically, residues 902–963 are cytoplasmic; the sequence is AACNEEVRSA…TPRHPLKAPA (62 aa).

This sequence belongs to the G-protein coupled receptor 2 family. Adhesion G-protein coupled receptor (ADGR) subfamily.

The protein resides in the membrane. In terms of biological role, orphan receptor. The protein is Adhesion G protein-coupled receptor D2 (ADGRD2) of Homo sapiens (Human).